We begin with the raw amino-acid sequence, 701 residues long: Triadin (701 aa).

Positions 1 to 28 (MTEITAEGNASTTTTVIDSKNGSVPKSP) are disordered. Topologically, residues 1–47 (MTEITAEGNASTTTTVIDSKNGSVPKSPGKVLKRTVTEDIVTTFSSP) are cytoplasmic. A compositionally biased stretch (polar residues) spans 8–24 (GNASTTTTVIDSKNGSV). Residues 48 to 68 (AAWLLVIALIITWSAVAVVMF) traverse the membrane as a helical segment. Over 69 to 701 (DLVDYKNFSA…SSPGQKQQGQ (633 aa)) the chain is Lumenal. The N-linked (GlcNAc...) asparagine glycan is linked to Asn75. Acidic residues predominate over residues 117–130 (DGDEDDDDGDEDTD). Disordered regions lie at residues 117-256 (DGDE…KHEQ), 273-654 (GDLR…TKRQ), and 676-701 (FPVTPAYRPGESSGQPSSPGQKQQGQ). Basic and acidic residues-rich tracts occupy residues 131-256 (KGEI…KHEQ), 303-351 (EGKE…KAPE), 365-385 (AKKDEKKEDSKKTKTPVEEHP), 391-426 (EKKEKYVEPAKSSKKEHSAPSEKQVKAKTERAKEET), 437-485 (GKKE…EVKP), and 492-643 (VKKE…KAKE). A glycan (N-linked (GlcNAc...) asparagine) is linked at Asn617. Over residues 684–701 (PGESSGQPSSPGQKQQGQ) the composition is skewed to low complexity.

In terms of assembly, homooligomer of variable subunit number; disulfide-linked. Interacts with CASQ1 and RYR1 in skeletal muscle. Interacts with CASQ2. Phosphorylated by CaMK2. In terms of processing, N-glycosylated. In terms of tissue distribution, detected in heart (at protein level). Skeletal and cardiac muscle.

The protein resides in the sarcoplasmic reticulum membrane. Contributes to the regulation of lumenal Ca2+ release via the sarcoplasmic reticulum calcium release channels RYR1 and RYR2, a key step in triggering skeletal and heart muscle contraction. Required for normal organization of the triad junction, where T-tubules and the sarcoplasmic reticulum terminal cisternae are in close contact. Required for normal skeletal muscle strength. Plays a role in excitation-contraction coupling in the heart and in regulating the rate of heart beats. The chain is Triadin (TRDN) from Canis lupus familiaris (Dog).